Consider the following 206-residue polypeptide: Uridine kinase (206 aa).

9-16 contributes to the ATP binding site; sequence GGSGSGKT.

It belongs to the uridine kinase family.

The protein resides in the cytoplasm. The catalysed reaction is uridine + ATP = UMP + ADP + H(+). It carries out the reaction cytidine + ATP = CMP + ADP + H(+). Its pathway is pyrimidine metabolism; CTP biosynthesis via salvage pathway; CTP from cytidine: step 1/3. The protein operates within pyrimidine metabolism; UMP biosynthesis via salvage pathway; UMP from uridine: step 1/1. The chain is Uridine kinase from Borrelia duttonii (strain Ly).